The primary structure comprises 495 residues: Two-component response regulator-like APRR3 (495 aa).

Residues 65-183 enclose the Response regulatory domain; the sequence is KVLLVENDDS…ELKNLWQHVW (119 aa). Disordered stretches follow at residues 188–441 and 465–495; these read SSSG…RWAQ and HSRKKLAEQRPHVKGQFIRKRDDHKSGSEDN. Positions 206–217 are enriched in polar residues; sequence PESTQGSENDAS. The span at 231–248 shows a compositional bias: low complexity; the sequence is GLSNQDGGSDNGSGTQSS. Residues 256–265 are compositionally biased toward polar residues; it reads TKSTSPSNQF. Basic and acidic residues predominate over residues 284–293; the sequence is RLKEAEDQKE. Polar residues predominate over residues 294 to 304; it reads QIGTGSQTGMS. Basic and acidic residues predominate over residues 307–319; that stretch reads KKAEEPGDLEKNA. Residues 335–350 are compositionally biased toward polar residues; sequence NRSSGNSQVESKAPSS. Positions 349–372 form a coiled coil; it reads SSNREDLQSLEQTLKKTREDRDYK. Over residues 351–378 the composition is skewed to basic and acidic residues; the sequence is NREDLQSLEQTLKKTREDRDYKVGDRSV. Composition is skewed to polar residues over residues 380-395 and 420-436; these read RHSNLSAFSKYNNGAT and GSSSSSDNPLKQQSSGS. The region spanning 442–484 is the CCT domain; the sequence is REAALMKFRLKRKERCFEKKVRYHSRKKLAEQRPHVKGQFIRK. A compositionally biased stretch (basic and acidic residues) spans 483-495; it reads RKRDDHKSGSEDN.

Belongs to the ARR-like family. In terms of assembly, interacts with APRR1/TOC1 (via N-terminus). Phosphorylated by WNK1; during the night. Phosphorylation is required for optimal interaction with APRR1/TOC1.

Its subcellular location is the nucleus. Its function is as follows. Controls photoperiodic flowering response. Component of the circadian clock. Controls the degradation of APRR1/TOC1 by the SCF(ZTL) complex. Expression of several members of the ARR-like family is controlled by circadian rhythm. The particular coordinated sequential expression of APRR9, APRR7, APRR5, APRR3 and APPR1 result to circadian waves that may be at the basis of the endogenous circadian clock. The protein is Two-component response regulator-like APRR3 (APRR3) of Arabidopsis thaliana (Mouse-ear cress).